The following is a 381-amino-acid chain: Cytochrome b (381 aa).

The next 4 helical transmembrane spans lie at 34 to 54, 78 to 99, 114 to 134, and 179 to 199; these read FGSL…FLAM, WLIR…YLHI, WNIG…GYVL, and FFAF…IHLL. Residues His84 and His98 each coordinate heme b. The heme b site is built by His183 and His197. His202 provides a ligand contact to a ubiquinone. The next 4 membrane-spanning stretches (helical) occupy residues 227-247, 289-309, 321-341, and 348-368; these read YKDL…ALFM, LGGV…PLLH, LTQI…WIGG, and FITV…IIMP.

This sequence belongs to the cytochrome b family. The cytochrome bc1 complex contains 3 respiratory subunits (MT-CYB, CYC1 and UQCRFS1), 2 core proteins (UQCRC1 and UQCRC2) and probably 6 low-molecular weight proteins. Heme b is required as a cofactor.

The protein resides in the mitochondrion inner membrane. Its function is as follows. Component of the ubiquinol-cytochrome c reductase complex (complex III or cytochrome b-c1 complex) that is part of the mitochondrial respiratory chain. The b-c1 complex mediates electron transfer from ubiquinol to cytochrome c. Contributes to the generation of a proton gradient across the mitochondrial membrane that is then used for ATP synthesis. The chain is Cytochrome b (mt-cyb) from Sphyrna tiburo vespertina (Pacific bonnethead shark).